A 539-amino-acid chain; its full sequence is Phosphoenolpyruvate carboxykinase (ATP) (539 aa).

The substrate site is built by Arg64, Tyr206, and Lys212. ATP-binding positions include Lys212, His231, and 247–255; that span reads GLSGTGKTT. Mn(2+) is bound by residues Lys212 and His231. Position 268 (Asp268) interacts with Mn(2+). ATP-binding positions include Glu296, Arg332, 448 to 449, and Thr454; that span reads RI. Residue Arg332 coordinates substrate.

The protein belongs to the phosphoenolpyruvate carboxykinase (ATP) family. As to quaternary structure, monomer. Mn(2+) serves as cofactor.

It is found in the cytoplasm. The enzyme catalyses oxaloacetate + ATP = phosphoenolpyruvate + ADP + CO2. Its pathway is carbohydrate biosynthesis; gluconeogenesis. In terms of biological role, involved in the gluconeogenesis. Catalyzes the conversion of oxaloacetate (OAA) to phosphoenolpyruvate (PEP) through direct phosphoryl transfer between the nucleoside triphosphate and OAA. This is Phosphoenolpyruvate carboxykinase (ATP) from Yersinia pseudotuberculosis serotype O:1b (strain IP 31758).